The following is a 393-amino-acid chain: Acetyl-CoA acetyltransferase (393 aa).

C88 serves as the catalytic Acyl-thioester intermediate. Catalysis depends on proton acceptor residues H349 and C379.

Belongs to the thiolase-like superfamily. Thiolase family.

The protein resides in the cytoplasm. It catalyses the reaction 2 acetyl-CoA = acetoacetyl-CoA + CoA. It functions in the pathway metabolic intermediate biosynthesis; (R)-mevalonate biosynthesis; (R)-mevalonate from acetyl-CoA: step 1/3. The polypeptide is Acetyl-CoA acetyltransferase (atoB) (Pseudomonas aeruginosa (strain ATCC 15692 / DSM 22644 / CIP 104116 / JCM 14847 / LMG 12228 / 1C / PRS 101 / PAO1)).